The sequence spans 436 residues: Methyl-accepting chemotaxis protein Amb0994 (436 aa).

Residues 1 to 8 are Cytoplasmic-facing; the sequence is METTLGSY. A helical membrane pass occupies residues 9–29; the sequence is ARTLSLGMLVPSAICLLAGTF. Residue G30 is a topological domain, periplasmic. A helical transmembrane segment spans residues 31–51; sequence LLGGSSIALWVVIAVSLLGVV. At 52–436 the chain is on the cytoplasmic side; it reads GGVKIGGSAR…DGFIARIGGR (385 aa). Residues 180 to 416 enclose the Methyl-accepting transducer domain; it reads AATELEASSG…QVADAASELS (237 aa). Glutamate methyl ester (Gln) is present on Q211. E225 is subject to Glutamate methyl ester (Glu). The interval 321–436 is required for interaction with MamK and to respond to the magnetic field; the sequence is TEDITSQVAH…DGFIARIGGR (116 aa).

This sequence belongs to the methyl-accepting chemotaxis (MCP) protein family. As to quaternary structure, interacts with MamK at cell poles and septa.

It is found in the cell inner membrane. Functionally, probable methyl-accepting taxis protein. May be the receptor that senses the torque generated from the interaction between the magnetosome dipole moment and the external magnetic field. Overproduction interferes with magnetotaxis, cells respond more slowly to changes in the magnetic field; requires the MamK-interacting C-terminus of the protein. The effect of magnetic sensing is to control flagellar rotation. Chemotactic-signal transducers respond to changes in the concentration of attractants and repellents in the environment, transduce a signal from the outside to the inside of the cell, and facilitate sensory adaptation through variation of methylation levels. Attractants increase the level of methylation while repellents decrease the level of methylation. In Paramagnetospirillum magneticum (strain ATCC 700264 / AMB-1) (Magnetospirillum magneticum), this protein is Methyl-accepting chemotaxis protein Amb0994.